A 44-amino-acid chain; its full sequence is SPbeta prophage-derived uncharacterized protein YosI (44 aa).

In Bacillus subtilis (strain 168), this protein is SPbeta prophage-derived uncharacterized protein YosI (yosI).